Reading from the N-terminus, the 62-residue chain is Inner membrane protein p12 (62 aa).

The chain crosses the membrane as a helical span at residues 16 to 36 (LLIVAIIVVIMAIMLYYFWWM).

Belongs to the asfivirus inner membrane protein p12 family. Homomultimer; disulfide-linked. In terms of processing, not glycosylated.

It localises to the virion membrane. The chain is Inner membrane protein p12 from African swine fever virus (isolate Tick/Malawi/Lil 20-1/1983) (ASFV).